The chain runs to 251 residues: Ubiquinone biosynthesis O-methyltransferase (251 aa).

Positions 36, 61, 82, and 124 each coordinate S-adenosyl-L-methionine.

The protein belongs to the methyltransferase superfamily. UbiG/COQ3 family.

It carries out the reaction a 3-demethylubiquinol + S-adenosyl-L-methionine = a ubiquinol + S-adenosyl-L-homocysteine + H(+). The enzyme catalyses a 3-(all-trans-polyprenyl)benzene-1,2-diol + S-adenosyl-L-methionine = a 2-methoxy-6-(all-trans-polyprenyl)phenol + S-adenosyl-L-homocysteine + H(+). The protein operates within cofactor biosynthesis; ubiquinone biosynthesis. Functionally, O-methyltransferase that catalyzes the 2 O-methylation steps in the ubiquinone biosynthetic pathway. This chain is Ubiquinone biosynthesis O-methyltransferase, found in Rickettsia akari (strain Hartford).